A 356-amino-acid chain; its full sequence is Malate dehydrogenase, glyoxysomal (356 aa).

A glyoxysome-targeting transit peptide spans 1–36 (MEDAAAAARRMERLASHLRPPASQMEESPLLRGSNC). NAD(+) is bound by residues 51–57 (GASGGIG) and D77. Residues R124 and R130 each contribute to the substrate site. Residues N137 and 160–162 (ISN) contribute to the NAD(+) site. Residues N162 and R196 each contribute to the substrate site. The active-site Proton acceptor is the H220. M271 contacts NAD(+).

It belongs to the LDH/MDH superfamily. MDH type 1 family. As to quaternary structure, homodimer.

The protein localises to the glyoxysome. It catalyses the reaction (S)-malate + NAD(+) = oxaloacetate + NADH + H(+). This Oryza sativa subsp. japonica (Rice) protein is Malate dehydrogenase, glyoxysomal.